Consider the following 318-residue polypeptide: MLRHAVRGWLAEHLPGAAPAVAVALSGGADSLALTAAAVVEAATVDALVVDHGLQPGSDAVAVAAAAQARTLGCRSARVLRVRVGSDGGLEAAAREARYAALGSARAGLPVLLGHTLDDQAETVLLGLARGSGARSIRGMAAYTPPWGRPLLGVRRADTRRLCADLGLTPHEDPHNRSAEFTRVRLRTEVLPLLEDVLGGGVAEALARTGRQLREDGAVLDALAADLASAAADAGDLRIETLATAPAALRRRAVRAWLLDSGAKAPTDRQLRAIDALVTAWRGQGGVAVGGGTPGMRLVAARERGRLTLRRQARSPAR.

Residue 26–31 (SGGADS) coordinates ATP.

The protein belongs to the tRNA(Ile)-lysidine synthase family.

Its subcellular location is the cytoplasm. It carries out the reaction cytidine(34) in tRNA(Ile2) + L-lysine + ATP = lysidine(34) in tRNA(Ile2) + AMP + diphosphate + H(+). In terms of biological role, ligates lysine onto the cytidine present at position 34 of the AUA codon-specific tRNA(Ile) that contains the anticodon CAU, in an ATP-dependent manner. Cytidine is converted to lysidine, thus changing the amino acid specificity of the tRNA from methionine to isoleucine. The chain is tRNA(Ile)-lysidine synthase from Nocardia farcinica (strain IFM 10152).